The following is a 456-amino-acid chain: uncharacterized protein (456 aa).

Over residues 415-428 (SNSNGSSSSGNSSS) the composition is skewed to low complexity. The interval 415 to 444 (SNSNGSSSSGNSSSIYNSHLMNDKKKNNNA) is disordered.

This is an uncharacterized protein from Saccharomyces cerevisiae (strain ATCC 204508 / S288c) (Baker's yeast).